A 973-amino-acid chain; its full sequence is MAAVTLSPCSMCCGSRRLRSVIVIQAQRGNWNRIRLSNFFFSKVWNISYRSKHKYSDNLLEQVEKYASARLENQSKLITKVAALMECDNVDDFIDKKSDEQVKKDLVLACKRFPSIILGDSRPVELYSNSKSYGESSSILKTPTDNSFLPTPMHGGWFDPDNLSRTLSSFCPELLQNDDSSDPREDILDDGSSFTSKTATSEVEATSDDVFAAQRFLATSIDSMPGLSKRHSNQLDSCGFHTMKKLLHHFPRTYADLQNAQVDIEDGQYLIFVGKVLSSKGVRASSSFSFLEVIVSCEVSGRDRTPEDLSHNAEDKAGKSIFLHLKKFFRGTRFTWQPFLNSIQEKHKVGDLVCISGKVKSLRAEDHFEMREYNIDVLKDEEESSHRAQGRPYPIYPSKGGLNPKFLSDVISRALRVLPANMDPIPKEITKVFGLPSLNDAYVGIHEPKTLDEADLARKRLIFDEFFYLQLARLYQMLQSLGTKIEKDVLLEKFRKPVLNSVYIEEWSTLTKSFLKALPYSLTPSQLSAVSEIIWDLKRPVPMNRLLQGDVGCGKTVVAFLACMEVIGSGYQAAFMAPTELLAIQHYEQCRDLLENMEGVSSKPTIGLLTGSTPAKQSRMIRQDLQSGAISFIIGTHSLIAEKIEYSALRIAVVDEQQRFGVIQRGKFNSKLYGTSMISKSGSSDSDDTSKADLSMAPHVLAMSATPIPRSLALALYGDISLTQITGMPLGRIPVETHIFEGNETGIKEVYSMMLEDLKSGGRVYVVYPVIDQSEQLPQLRAASAELEIVTKKFPKYNCGLLHGRMKSDDKEEALNKFRSGETQILLSTQVIEIGVDVPDASMMVVMNAERFGIAQLHQLRGRVGRGTRKSKCLLVGSSTNSLKRLNMLGKSSDGFYLANIDLLLRGPGDLLGKKQSGHLPEFPVARLEIDGNMLQEAHIAALNVLGDSHDLEKFPALKAELSMRQPLCLLGD.

Positions 1–208 (MAAVTLSPCS…ATSEVEATSD (208 aa)) are sufficient for chloroplastic and mitochondrial trgeting. Residues 174 to 200 (LLQNDDSSDPREDILDDGSSFTSKTAT) form a disordered region. A Helicase ATP-binding domain is found at 536–725 (DLKRPVPMNR…LYGDISLTQI (190 aa)). 549–556 (GDVGCGKT) lines the ATP pocket. A DEQQ box motif is present at residues 655 to 658 (DEQQ). The region spanning 746-904 (GIKEVYSMML…GFYLANIDLL (159 aa)) is the Helicase C-terminal domain.

Belongs to the helicase family. RecG subfamily. In terms of tissue distribution, expressed in most tissues, not seen in pollen, ovules or developing seeds.

It is found in the plastid. The protein localises to the chloroplast. Its subcellular location is the mitochondrion. It catalyses the reaction Couples ATP hydrolysis with the unwinding of duplex DNA by translocating in the 3'-5' direction.. The enzyme catalyses ATP + H2O = ADP + phosphate + H(+). In terms of biological role, plays a critical role in recombination and DNA repair. Helps process Holliday junction (HJ) intermediates to mature products by catalyzing branch migration. Has replication fork regression activity, unwinds stalled or blocked replication forks to make a HJ that can be resolved. Has a DNA unwinding activity characteristic of a DNA helicase with 3'-5' polarity. Plays a role in recombination surveillance and repair of double-stranded (ds)DNA breaks in the mitochondrion. May be able to dissociate D- and R-loops. Able to complement UV sensitivity of a recG deletion in E.coli. The chain is ATP-dependent DNA helicase homolog RECG1, chloroplastic/mitochondrial from Arabidopsis thaliana (Mouse-ear cress).